The chain runs to 427 residues: Gamma-glutamyl phosphate reductase (427 aa).

The protein belongs to the gamma-glutamyl phosphate reductase family.

It is found in the cytoplasm. The catalysed reaction is L-glutamate 5-semialdehyde + phosphate + NADP(+) = L-glutamyl 5-phosphate + NADPH + H(+). The protein operates within amino-acid biosynthesis; L-proline biosynthesis; L-glutamate 5-semialdehyde from L-glutamate: step 2/2. Its function is as follows. Catalyzes the NADPH-dependent reduction of L-glutamate 5-phosphate into L-glutamate 5-semialdehyde and phosphate. The product spontaneously undergoes cyclization to form 1-pyrroline-5-carboxylate. The polypeptide is Gamma-glutamyl phosphate reductase (Rhizobium meliloti (strain 1021) (Ensifer meliloti)).